Consider the following 357-residue polypeptide: tRNA-specific 2-thiouridylase MnmA (357 aa).

Residues 10-17 (GISGGVDS) and Ile-36 contribute to the ATP site. Cys-98 serves as the catalytic Nucleophile. Cys-98 and Cys-194 are disulfide-bonded. Residue Gly-122 participates in ATP binding. Positions 144–146 (KDQ) are interaction with tRNA. Residue Cys-194 is the Cysteine persulfide intermediate of the active site. The interaction with tRNA stretch occupies residues 303–304 (RY).

This sequence belongs to the MnmA/TRMU family.

The protein localises to the cytoplasm. The enzyme catalyses S-sulfanyl-L-cysteinyl-[protein] + uridine(34) in tRNA + AH2 + ATP = 2-thiouridine(34) in tRNA + L-cysteinyl-[protein] + A + AMP + diphosphate + H(+). Catalyzes the 2-thiolation of uridine at the wobble position (U34) of tRNA, leading to the formation of s(2)U34. The chain is tRNA-specific 2-thiouridylase MnmA from Chlorobium phaeovibrioides (strain DSM 265 / 1930) (Prosthecochloris vibrioformis (strain DSM 265)).